Reading from the N-terminus, the 966-residue chain is Integrator complex subunit 7 (966 aa).

A phosphoserine mark is found at serine 338 and serine 809. Residues 941–966 (LQQQAQQPLQPQPLPQPQPRSAYTRF) form a disordered region.

It belongs to the Integrator subunit 7 family. In terms of assembly, component of the Integrator complex, composed of core subunits INTS1, INTS2, INTS3, INTS4, INTS5, INTS6, INTS7, INTS8, INTS9/RC74, INTS10, INTS11/CPSF3L, INTS12, INTS13, INTS14 and INTS15. The core complex associates with protein phosphatase 2A subunits PPP2CA and PPP2R1A, to form the Integrator-PP2A (INTAC) complex. Interacts with NABP2.

The protein resides in the nucleus. It is found in the chromosome. Its subcellular location is the cytoplasm. Functionally, component of the integrator complex, a multiprotein complex that terminates RNA polymerase II (Pol II) transcription in the promoter-proximal region of genes. The integrator complex provides a quality checkpoint during transcription elongation by driving premature transcription termination of transcripts that are unfavorably configured for transcriptional elongation: the complex terminates transcription by (1) catalyzing dephosphorylation of the C-terminal domain (CTD) of Pol II subunit POLR2A/RPB1 and SUPT5H/SPT5, (2) degrading the exiting nascent RNA transcript via endonuclease activity and (3) promoting the release of Pol II from bound DNA. The integrator complex is also involved in terminating the synthesis of non-coding Pol II transcripts, such as enhancer RNAs (eRNAs), small nuclear RNAs (snRNAs), telomerase RNAs and long non-coding RNAs (lncRNAs). May be not involved in the recruitment of cytoplasmic dynein to the nuclear envelope by different components of the INT complex. Plays a role in DNA damage response (DDR) signaling during the S phase. In Mus musculus (Mouse), this protein is Integrator complex subunit 7 (Ints7).